Here is a 465-residue protein sequence, read N- to C-terminus: Siroheme synthase (465 aa).

The precorrin-2 dehydrogenase /sirohydrochlorin ferrochelatase stretch occupies residues methionine 1 to leucine 203. NAD(+) is bound by residues glutamate 22–valine 23 and proline 43–glutamine 44. Phosphoserine is present on serine 128. Positions glycine 217–alanine 465 are uroporphyrinogen-III C-methyltransferase. Proline 226 contributes to the S-adenosyl-L-methionine binding site. Aspartate 249 serves as the catalytic Proton acceptor. Lysine 271 serves as the catalytic Proton donor. S-adenosyl-L-methionine-binding positions include glycine 302–aspartate 304, isoleucine 307, threonine 332–alanine 333, methionine 384, and glycine 413.

In the N-terminal section; belongs to the precorrin-2 dehydrogenase / sirohydrochlorin ferrochelatase family. The protein in the C-terminal section; belongs to the precorrin methyltransferase family.

The enzyme catalyses uroporphyrinogen III + 2 S-adenosyl-L-methionine = precorrin-2 + 2 S-adenosyl-L-homocysteine + H(+). It catalyses the reaction precorrin-2 + NAD(+) = sirohydrochlorin + NADH + 2 H(+). It carries out the reaction siroheme + 2 H(+) = sirohydrochlorin + Fe(2+). The protein operates within cofactor biosynthesis; adenosylcobalamin biosynthesis; precorrin-2 from uroporphyrinogen III: step 1/1. It participates in cofactor biosynthesis; adenosylcobalamin biosynthesis; sirohydrochlorin from precorrin-2: step 1/1. Its pathway is porphyrin-containing compound metabolism; siroheme biosynthesis; precorrin-2 from uroporphyrinogen III: step 1/1. It functions in the pathway porphyrin-containing compound metabolism; siroheme biosynthesis; siroheme from sirohydrochlorin: step 1/1. The protein operates within porphyrin-containing compound metabolism; siroheme biosynthesis; sirohydrochlorin from precorrin-2: step 1/1. Multifunctional enzyme that catalyzes the SAM-dependent methylations of uroporphyrinogen III at position C-2 and C-7 to form precorrin-2 via precorrin-1. Then it catalyzes the NAD-dependent ring dehydrogenation of precorrin-2 to yield sirohydrochlorin. Finally, it catalyzes the ferrochelation of sirohydrochlorin to yield siroheme. This chain is Siroheme synthase, found in Pseudomonas aeruginosa (strain UCBPP-PA14).